Consider the following 2211-residue polypeptide: Nonribosomal peptide synthetase 13 (2211 aa).

The adenylation 1 stretch occupies residues 76 to 475 (TYAELDSLSD…IEHHLQLTLP (400 aa)). A Carrier 1 domain is found at 594 to 671 (PPSTPKEATI…EQSKRAGLIQ (78 aa)). S631 carries the O-(pantetheine 4'-phosphoryl)serine modification. A condensation 1 region spans residues 710–975 (EDIYPCTALQ…IATVPTRIRV (266 aa)). The segment at 1169 to 1563 (TYRELWAHSS…LGAVEASVMR (395 aa)) is adenylation 2. The 80-residue stretch at 1677–1756 (PMSDDNERRL…RSRHLITEQA (80 aa)) folds into the Carrier 2 domain. S1714 is subject to O-(pantetheine 4'-phosphoryl)serine. Residues 1814–2069 (HFQFDLSGAV…CTNYIPYRLS (256 aa)) are condensation 2.

It belongs to the NRP synthetase family.

The enzyme catalyses L-proline + L-tryptophan + 2 ATP = brevianamide F + 2 AMP + 2 diphosphate + 2 H(+). It participates in mycotoxin biosynthesis. In terms of biological role, nonribosomal peptide synthetase; part of the gene cluster that mediates the biosynthesis of fumitremorgins, indole alkaloids that carry not only intriguing chemical structures, but also interesting biological and pharmacological activities. The biosynthesis of fumitremorgin-type alkaloids begins by condensation of the two amino acids L-tryptophan and L-proline to brevianamide F, catalyzed by the non-ribosomal peptide synthetase ftmA. Brevianamide F is then prenylated by the prenyltransferase ftmPT1/ftmB in the presence of dimethylallyl diphosphate, resulting in the formation of tryprostatin B. The three cytochrome P450 monooxygenases, ftmP450-1/ftmC, ftmP450-2/ftmE and ftmP450-3/FtmG, are responsible for the conversion of tryprostatin B to 6-hydroxytryprostatin B, tryprostatin A to fumitremorgin C and fumitremorgin C to 12,13-dihydroxyfumitremorgin C, respectively. The putative methyltransferase ftmMT/ftmD is expected for the conversion of 6-hydroxytryprostatin B to tryprostatin A. FtmPT2/FtmH catalyzes the prenylation of 12,13-dihydroxyfumitre-morgin C in the presence of dimethylallyl diphosphate, resulting in the formation of fumitremorgin B. Fumitremorgin B is further converted to verruculogen by ftmOx1/ftmF via the insertion of an endoperoxide bond between the two prenyl moieties. In some fungal species, verruculogen is further converted to fumitremorgin A, but the enzymes involved in this step have not been identified yet. This is Nonribosomal peptide synthetase 13 from Aspergillus fumigatus (strain ATCC MYA-4609 / CBS 101355 / FGSC A1100 / Af293) (Neosartorya fumigata).